The sequence spans 90 residues: Acylphosphatase (90 aa).

The Acylphosphatase-like domain occupies 3–88; that stretch reads TWHMTAHGRV…GKFEDFDLRP (86 aa). Catalysis depends on residues Arg18 and Asn36.

It belongs to the acylphosphatase family.

The enzyme catalyses an acyl phosphate + H2O = a carboxylate + phosphate + H(+). This chain is Acylphosphatase (acyP), found in Cupriavidus pinatubonensis (strain JMP 134 / LMG 1197) (Cupriavidus necator (strain JMP 134)).